Consider the following 461-residue polypeptide: Photosynthetic NDH subunit of subcomplex B 1, chloroplastic (461 aa).

Residues 1–44 constitute a chloroplast transit peptide; the sequence is MASSLPLLPKPISPFFKTPPFSTSKPLVFLNFQTRLTSRSSDVS. The segment at 66 to 90 is disordered; sequence NEYGSLFADGKQDEDPRPPDNPDNP. The segment covering 75–85 has biased composition (basic and acidic residues); sequence GKQDEDPRPPD.

As to quaternary structure, part of the chloroplast NDH complex, composed of a mixture of chloroplast and nucleus encoded subunits. Component of the NDH subcomplex B, at least composed of PnsB1, PnsB2, PnsB3, PnsB4 and PnsB5.

It localises to the plastid. The protein resides in the chloroplast thylakoid membrane. NDH shuttles electrons from NAD(P)H:plastoquinone, via FMN and iron-sulfur (Fe-S) centers, to quinones in the photosynthetic chain and possibly in a chloroplast respiratory chain. The immediate electron acceptor for the enzyme in this species is believed to be plastoquinone. Couples the redox reaction to proton translocation, and thus conserves the redox energy in a proton gradient. The protein is Photosynthetic NDH subunit of subcomplex B 1, chloroplastic of Arabidopsis thaliana (Mouse-ear cress).